The sequence spans 327 residues: Probable pectinesterase A (327 aa).

The first 19 residues, 1–19 (MHTPYLLGALAALAATAVG), serve as a signal peptide directing secretion. Asn-84 carries an N-linked (GlcNAc...) asparagine glycan. Gln-145 contributes to the substrate binding site. Asp-168 (proton donor) is an active-site residue. The active-site Nucleophile is Asp-189. The substrate site is built by Arg-249 and Trp-251. The N-linked (GlcNAc...) asparagine glycan is linked to Asn-288.

The protein belongs to the pectinesterase family.

Its subcellular location is the secreted. The enzyme catalyses [(1-&gt;4)-alpha-D-galacturonosyl methyl ester](n) + n H2O = [(1-&gt;4)-alpha-D-galacturonosyl](n) + n methanol + n H(+). The protein operates within glycan metabolism; pectin degradation; 2-dehydro-3-deoxy-D-gluconate from pectin: step 1/5. Its function is as follows. Involved in maceration and soft-rotting of plant tissue. The polypeptide is Probable pectinesterase A (pmeA) (Aspergillus niger (strain ATCC MYA-4892 / CBS 513.88 / FGSC A1513)).